A 638-amino-acid polypeptide reads, in one-letter code: Outer dense fiber protein 2 (638 aa).

At T73 the chain carries Phosphothreonine. Residue S76 is modified to Phosphoserine; by TSSK4. Phosphoserine occurs at positions 87 and 90. Position 91 is a phosphothreonine (T91). S96 and S110 each carry phosphoserine. A Glycyl lysine isopeptide (Lys-Gly) (interchain with G-Cter in SUMO2) cross-link involves residue K119. The residue at position 120 (S120) is a Phosphoserine. Positions Q125 to D198 form a coiled coil. At T212 the chain carries Phosphothreonine. Coiled-coil stretches lie at residues D226–L404 and E442–R616. Position 242 is a phosphoserine (S242). The tract at residues K373–K396 is disordered. S613 bears the Phosphoserine mark.

The protein belongs to the ODF2 family. In terms of assembly, self-associates. Associates with microtubules and forms a fibrillar structure partially linked to the microtubule network. Interacts via its C-terminus with PLK1. Interacts with ODF1. Localized at the distal/subdistal appendages of mother centrioles. Interacts with MARK4; the interaction is required for localization of ODF2 to centrioles. Interacts with TSSK4. Interacts with AKNA. Interacts with QRICH2. Interacts with CFAP58. Interacts with BBOF1. Interacts with CCDC38. Interacts with CCDC42. Post-translationally, tyrosine phosphorylated. Phosphorylated on Ser-76 by TSSK4.

The protein resides in the cytoplasm. It localises to the cytoskeleton. Its subcellular location is the microtubule organizing center. It is found in the centrosome. The protein localises to the cell projection. The protein resides in the cilium. It localises to the centriole. Its subcellular location is the spindle pole. It is found in the flagellum. Its function is as follows. Seems to be a major component of sperm tail outer dense fibers (ODF). ODFs are filamentous structures located on the outside of the axoneme in the midpiece and principal piece of the mammalian sperm tail and may help to maintain the passive elastic structures and elastic recoil of the sperm tail. May have a modulating influence on sperm motility. Functions as a general scaffold protein that is specifically localized at the distal/subdistal appendages of mother centrioles. Component of the centrosome matrix required for the localization of PLK1 and NIN to the centrosomes. Required for the formation and/or maintenance of normal CETN1 assembly. This chain is Outer dense fiber protein 2 (ODF2), found in Macaca fascicularis (Crab-eating macaque).